The chain runs to 118 residues: Large ribosomal subunit protein bL20 (118 aa).

The protein belongs to the bacterial ribosomal protein bL20 family.

Its function is as follows. Binds directly to 23S ribosomal RNA and is necessary for the in vitro assembly process of the 50S ribosomal subunit. It is not involved in the protein synthesizing functions of that subunit. The chain is Large ribosomal subunit protein bL20 (rplT) from Aquifex aeolicus (strain VF5).